Consider the following 236-residue polypeptide: Large ribosomal subunit protein uL3 (236 aa).

Residues 139–163 form a disordered region; it reads ARDSSTTHEHHRHVGAIGQRKTPGK.

The protein belongs to the universal ribosomal protein uL3 family. As to quaternary structure, part of the 50S ribosomal subunit. Forms a cluster with proteins L14 and L19.

In terms of biological role, one of the primary rRNA binding proteins, it binds directly near the 3'-end of the 23S rRNA, where it nucleates assembly of the 50S subunit. This is Large ribosomal subunit protein uL3 from Anaeromyxobacter sp. (strain Fw109-5).